We begin with the raw amino-acid sequence, 268 residues long: Ribosomal RNA small subunit methyltransferase A (268 aa).

The S-adenosyl-L-methionine site is built by asparagine 12, leucine 14, glycine 38, glutamate 59, aspartate 82, and asparagine 107.

The protein belongs to the class I-like SAM-binding methyltransferase superfamily. rRNA adenine N(6)-methyltransferase family. RsmA subfamily.

The protein localises to the cytoplasm. It catalyses the reaction adenosine(1518)/adenosine(1519) in 16S rRNA + 4 S-adenosyl-L-methionine = N(6)-dimethyladenosine(1518)/N(6)-dimethyladenosine(1519) in 16S rRNA + 4 S-adenosyl-L-homocysteine + 4 H(+). In terms of biological role, specifically dimethylates two adjacent adenosines (A1518 and A1519) in the loop of a conserved hairpin near the 3'-end of 16S rRNA in the 30S particle. May play a critical role in biogenesis of 30S subunits. The polypeptide is Ribosomal RNA small subunit methyltransferase A (Onion yellows phytoplasma (strain OY-M)).